A 194-amino-acid chain; its full sequence is Endoribonuclease YbeY (194 aa).

His-127, His-131, and Asp-137 together coordinate Zn(2+). The segment at 162 to 194 is disordered; sequence PLSNDEDSAPEQDDSFDDDASDSSGGIMSGGVS. The segment covering 165-182 has biased composition (acidic residues); it reads NDEDSAPEQDDSFDDDAS.

It belongs to the endoribonuclease YbeY family. The cofactor is Zn(2+).

Its subcellular location is the cytoplasm. Its function is as follows. Single strand-specific metallo-endoribonuclease involved in late-stage 70S ribosome quality control and in maturation of the 3' terminus of the 16S rRNA. This chain is Endoribonuclease YbeY, found in Rhodopirellula baltica (strain DSM 10527 / NCIMB 13988 / SH1).